A 21-amino-acid polypeptide reads, in one-letter code: Large ribosomal subunit protein uL29 (21 aa).

It belongs to the universal ribosomal protein uL29 family.

The sequence is that of Large ribosomal subunit protein uL29 (rpmC) from Brevundimonas diminuta (Pseudomonas diminuta).